The primary structure comprises 231 residues: tRNA1(Val) (adenine(37)-N6)-methyltransferase (231 aa).

The protein belongs to the methyltransferase superfamily. tRNA (adenine-N(6)-)-methyltransferase family.

The protein resides in the cytoplasm. The catalysed reaction is adenosine(37) in tRNA1(Val) + S-adenosyl-L-methionine = N(6)-methyladenosine(37) in tRNA1(Val) + S-adenosyl-L-homocysteine + H(+). Its function is as follows. Specifically methylates the adenine in position 37 of tRNA(1)(Val) (anticodon cmo5UAC). The chain is tRNA1(Val) (adenine(37)-N6)-methyltransferase from Flavobacteriaceae bacterium (strain 3519-10).